The following is a 214-amino-acid chain: Superoxide dismutase [Mn/Fe] (214 aa).

Residues H31, H79, D165, and H169 each coordinate Fe(3+). H31, H79, D165, and H169 together coordinate Mn(2+).

This sequence belongs to the iron/manganese superoxide dismutase family. Requires Mn(2+) as cofactor. Fe(3+) serves as cofactor.

The enzyme catalyses 2 superoxide + 2 H(+) = H2O2 + O2. Functionally, destroys superoxide anion radicals which are normally produced within the cells and which are toxic to biological systems. Catalyzes the dismutation of superoxide anion radicals into O2 and H2O2 by successive reduction and oxidation of the transition metal ion at the active site. This Aeropyrum pernix (strain ATCC 700893 / DSM 11879 / JCM 9820 / NBRC 100138 / K1) protein is Superoxide dismutase [Mn/Fe] (sod).